Reading from the N-terminus, the 405-residue chain is Cystathionine gamma-lyase (405 aa).

Substrate contacts are provided by arginine 62, tyrosine 114, and arginine 119. Residue lysine 212 is modified to N6-(pyridoxal phosphate)lysine. Glutamate 339 lines the substrate pocket.

The protein belongs to the trans-sulfuration enzymes family. Homotetramer. Interacts with CALM in a calcium-dependent manner. It depends on pyridoxal 5'-phosphate as a cofactor.

It localises to the cytoplasm. The catalysed reaction is L,L-cystathionine + H2O = 2-oxobutanoate + L-cysteine + NH4(+). The enzyme catalyses L-cysteine + H2O = hydrogen sulfide + pyruvate + NH4(+) + H(+). It catalyses the reaction L-homocysteine + H2O = 2-oxobutanoate + hydrogen sulfide + NH4(+) + H(+). It carries out the reaction L-homoserine = 2-oxobutanoate + NH4(+). The catalysed reaction is L-selenocystathionine + H2O = L-selenocysteine + 2-oxobutanoate + NH4(+). The protein operates within amino-acid biosynthesis; L-cysteine biosynthesis; L-cysteine from L-homocysteine and L-serine: step 2/2. Its function is as follows. Catalyzes the last step in the trans-sulfuration pathway from L-methionine to L-cysteine in a pyridoxal-5'-phosphate (PLP)-dependent manner, which consists on cleaving the L,L-cystathionine molecule into L-cysteine, ammonia and 2-oxobutanoate. Part of the L-cysteine derived from the trans-sulfuration pathway is utilized for biosynthesis of the ubiquitous antioxidant glutathione. Besides its role in the conversion of L-cystathionine into L-cysteine, it utilizes L-cysteine and L-homocysteine as substrates (at much lower rates than L,L-cystathionine) to produce hydrogen sulfide (H2S). In vitro, it converts two L-cysteine molecules into lanthionine and H2S, and two L-homocysteine molecules to homolanthionine and H2S, which can be particularly relevant under conditions of severe hyperhomocysteinemia. Lanthionine and homolanthionine are structural homologs of L,L-cystathionine that differ by the absence or presence of an extra methylene group, respectively. Acts as a cysteine-protein sulfhydrase by mediating sulfhydration of target proteins: sulfhydration consists of converting -SH groups into -SSH on specific cysteine residues of target proteins such as GAPDH, PTPN1 and NF-kappa-B subunit RELA, thereby regulating their function. By generating the gasotransmitter H2S, it participates in a number of physiological processes such as vasodilation, bone protection, and inflammation. Plays an essential role in myogenesis by contributing to the biogenesis of H2S in skeletal muscle tissue. Can also accept homoserine as substrate. Catalyzes the elimination of selenocystathionine (which can be derived from the diet) to yield selenocysteine, ammonia and 2-oxobutanoate. The protein is Cystathionine gamma-lyase (CTH) of Macaca fascicularis (Crab-eating macaque).